We begin with the raw amino-acid sequence, 185 residues long: Ribosome-recycling factor (185 aa).

This sequence belongs to the RRF family.

Its subcellular location is the cytoplasm. In terms of biological role, responsible for the release of ribosomes from messenger RNA at the termination of protein biosynthesis. May increase the efficiency of translation by recycling ribosomes from one round of translation to another. The chain is Ribosome-recycling factor from Shewanella sp. (strain MR-4).